A 264-amino-acid chain; its full sequence is Thymidylate synthase (264 aa).

DUMP is bound at residue arginine 21. Histidine 51 is a (6R)-5,10-methylene-5,6,7,8-tetrahydrofolate binding site. Arginine 126 to arginine 127 serves as a coordination point for dUMP. The active-site Nucleophile is the cysteine 146. Residues arginine 166–aspartate 169, asparagine 177, and histidine 207–tyrosine 209 contribute to the dUMP site. Residue aspartate 169 coordinates (6R)-5,10-methylene-5,6,7,8-tetrahydrofolate. Alanine 263 contributes to the (6R)-5,10-methylene-5,6,7,8-tetrahydrofolate binding site.

It belongs to the thymidylate synthase family. Bacterial-type ThyA subfamily. In terms of assembly, homodimer.

The protein resides in the cytoplasm. The enzyme catalyses dUMP + (6R)-5,10-methylene-5,6,7,8-tetrahydrofolate = 7,8-dihydrofolate + dTMP. It participates in pyrimidine metabolism; dTTP biosynthesis. Catalyzes the reductive methylation of 2'-deoxyuridine-5'-monophosphate (dUMP) to 2'-deoxythymidine-5'-monophosphate (dTMP) while utilizing 5,10-methylenetetrahydrofolate (mTHF) as the methyl donor and reductant in the reaction, yielding dihydrofolate (DHF) as a by-product. This enzymatic reaction provides an intracellular de novo source of dTMP, an essential precursor for DNA biosynthesis. The sequence is that of Thymidylate synthase from Thiobacillus denitrificans (strain ATCC 25259 / T1).